Consider the following 155-residue polypeptide: DNA-binding protein inhibitor ID-1 (155 aa).

One can recognise a bHLH domain in the interval 53–105 (LPALLDEQQVNVLLYDMNGCYSRLKELVPTLPQNRKVSKVEILQHVIDYIRDL). The Nuclear export signal signature appears at 98–111 (VIDYIRDLQLELNS).

In terms of assembly, heterodimer with other HLH proteins. Interacts with COPS5, IFI204, GATA4 and NKX2-5. Interacts with CLOCK and BMAL1.

It is found in the cytoplasm. It localises to the nucleus. Transcriptional regulator (lacking a basic DNA binding domain) which negatively regulates the basic helix-loop-helix (bHLH) transcription factors by forming heterodimers and inhibiting their DNA binding and transcriptional activity. Implicated in regulating a variety of cellular processes, including cellular growth, senescence, differentiation, apoptosis, angiogenesis, and neoplastic transformation. Inhibits skeletal muscle and cardiac myocyte differentiation. Regulates the circadian clock by repressing the transcriptional activator activity of the CLOCK-BMAL1 heterodimer. The chain is DNA-binding protein inhibitor ID-1 (ID1) from Homo sapiens (Human).